The sequence spans 334 residues: Ornithine carbamoyltransferase (334 aa).

Carbamoyl phosphate-binding positions include 57-60 (STRT), Arg-108, and 135-138 (HPTQ). L-ornithine-binding positions include Asn-168, Asp-232, and 236-237 (SM). Carbamoyl phosphate contacts are provided by residues 274-275 (CL) and Arg-321.

This sequence belongs to the aspartate/ornithine carbamoyltransferase superfamily. OTCase family.

Its subcellular location is the cytoplasm. The enzyme catalyses carbamoyl phosphate + L-ornithine = L-citrulline + phosphate + H(+). The protein operates within amino-acid biosynthesis; L-arginine biosynthesis; L-arginine from L-ornithine and carbamoyl phosphate: step 1/3. Its function is as follows. Reversibly catalyzes the transfer of the carbamoyl group from carbamoyl phosphate (CP) to the N(epsilon) atom of ornithine (ORN) to produce L-citrulline. This is Ornithine carbamoyltransferase from Cutibacterium acnes (strain DSM 16379 / KPA171202) (Propionibacterium acnes).